A 259-amino-acid polypeptide reads, in one-letter code: Phosphatidylglycerol--prolipoprotein diacylglyceryl transferase (259 aa).

The next 4 membrane-spanning stretches (helical) occupy residues 12 to 32 (LAIH…VYLA), 41 to 61 (ISSD…IVGA), 80 to 100 (IIAI…GALV), and 109 to 129 (VLNP…AQAI). Arg131 is an a 1,2-diacyl-sn-glycero-3-phospho-(1'-sn-glycerol) binding site. The next 3 membrane-spanning stretches (helical) occupy residues 167–187 (IPTF…IMMW), 194–214 (LLDG…RLVI), and 226–246 (GIRI…IFVI).

The protein belongs to the Lgt family.

The protein resides in the cell membrane. The catalysed reaction is L-cysteinyl-[prolipoprotein] + a 1,2-diacyl-sn-glycero-3-phospho-(1'-sn-glycerol) = an S-1,2-diacyl-sn-glyceryl-L-cysteinyl-[prolipoprotein] + sn-glycerol 1-phosphate + H(+). It functions in the pathway protein modification; lipoprotein biosynthesis (diacylglyceryl transfer). In terms of biological role, catalyzes the transfer of the diacylglyceryl group from phosphatidylglycerol to the sulfhydryl group of the N-terminal cysteine of a prolipoprotein, the first step in the formation of mature lipoproteins. The polypeptide is Phosphatidylglycerol--prolipoprotein diacylglyceryl transferase (Streptococcus pyogenes serotype M49 (strain NZ131)).